Consider the following 211-residue polypeptide: Urease accessory protein UreF (211 aa).

A disordered region spans residues 68–93; it reads LAPDGADRETDARTPSPAARDASRSQ.

It belongs to the UreF family. As to quaternary structure, ureD, UreF and UreG form a complex that acts as a GTP-hydrolysis-dependent molecular chaperone, activating the urease apoprotein by helping to assemble the nickel containing metallocenter of UreC. The UreE protein probably delivers the nickel.

It localises to the cytoplasm. Its function is as follows. Required for maturation of urease via the functional incorporation of the urease nickel metallocenter. In Mycobacterium marinum (strain ATCC BAA-535 / M), this protein is Urease accessory protein UreF.